The following is a 262-amino-acid chain: Putative hydroxypyruvate isomerase (262 aa).

Active-site proton donor/acceptor residues include Glu-146 and Glu-244.

The protein belongs to the hyi family.

The enzyme catalyses 3-hydroxypyruvate = 2-hydroxy-3-oxopropanoate. Its function is as follows. Catalyzes the reversible isomerization between hydroxypyruvate and 2-hydroxy-3-oxopropanoate (also termed tartronate semialdehyde). The chain is Putative hydroxypyruvate isomerase from Caenorhabditis elegans.